The chain runs to 1776 residues: MDSDGVSHAPSVAQSAPSWNPALRHEKDHAPAATAKLPSQVKPESSSEEESEEEEEEEDDDEDDEEEEDSDEDDDEEENAPAATAVSGPTPIAVLDGAQDSEDESESPSELTKSTPIVQASQGSMEKRVEVIGAEEEALVNAAQALNISGNPATGQTKAESTDEAESDEDSEEEESSDEEAAAAGEHQADNYEHQGEATALEEAVNESVRVPLVDDAAPESDDWGDSGDPFEIGGLQQDPSLQTPHAEAAGTTVGDDVIGNTTVGGNAGDDLDWGNTEEEDFFGVVANKPVESVEPAQPTQSPGAHVVQAQDAAPAKSEWDLDLDLDEDFLPDNEDGPVIELSDDEGFLDDEPTAPVEQPASTGIGGASRYAPQAAQTSHSVASPYAAPGQFANPPQGSMTRSITTPAGGVYNGYGQNVAYQQQQAARPTMPTSAQSYADKSKGGYASPYDLPDDVVTTRKRTTPRPVISATQPAIPPPRTSSMSSSSAPPRPLPPSNASVASLSPPPSGHSMQGQMTGFPPAVPPKSAPPAKAPSSDFFAELPVTSKPKPPGRYTPQPAAAAQSPSLQGPPQFTQKERTASWSSLRNEVLPDTVGAQPHLRQPEQLPMFPSQPSVPTRQNSLPIPQSTAPPPSSRYSPAPPSVPANNARYSPAPPTAQGGANSRYSPAPPGSQGAAHARYVSEPPTGPARTPSQTYAPRTSSPLAFHSTPHHQENTTNVSEQQLPGHHVTQSADGVPRAPFRSPLEGVSEALELDSTSSDRPPTTARSDTPPPTRSSTSSAIGSPRKKGNYTPQYQPMNPMAPSRSLSQSPATGMKQPGPMYGAAPIAASYGTHIQEATTTNSIPHRRQASLNYECIVPEDERAVDPLQRYKGHPVFAWGLGGTIVTTFPKQIPRYGGGMTAPMVKCSPGEIKIQSVKEIIPLAEDLAKFPGPLKAKSKKKDVLSWLTKRLESLELQIKDPNTEHTLSVDELKRLEEKTLLLKLLQFLVENDGRLEGEAANAAFKNLFSPEADNASDAEGSFSTAADIVGRSRSNTVNTPAEPIDARAIEDLQKMLARGEREKAVWHAVDQRLWGHAMLLSSTLSKDIWKQVVQEFVRNEVKKVGRSNQALAVLYEVFAGNHEDCIDELVPASARAGFQMVSTDGAGAALNAQQGLDKWRETIALILNNRSEGDVSALLSLGKLLSQYGRVEAAHICFILGRSVAHVSGVDDALADLVLIGIDHKQHPTELGVDLEPILLTEVYEFALSLSAQVNSHIMPHLQNYKLAHAYQLAEHGYRTEAQAYCDAIAAAMKATTRTSPYYNLSFIASLDDLSKRLSQSPKDSSSSWISKPSMDRVSTSLMSKFNSFIAGEDDGPSSNAATGTEVGPFAKITGDSPGLTPSHSNADLYADCFCKFKICSFKYIRTKDVIRATEIALRAAGQTFYGVERQPPPQPQLSPPSQRTQAKMQSYSPLRAEHNVSQPSYGNPYMPTPPNEETASASSFGGYQPQQGTGHSFDDPAPPTSSFDEPSYQPYNPDADDMEEDNKPKKKSIMDDDDDDLVARAAALKIGSGSNSKSDADKKADEAFRKAAEADAKRDKENAAKKAGGGWLSGWFKKDPNAAPGPIKAKLGEESSFYYDPDLGKWVNKKGGSSEPERATATPPPPKGPPMGARSASGGMPPPSGPPPSGAGLMKPPTSAPLRSSSMPPPMGLPGSRSSTPGLPSDNEGGPKPPTLARPSFGAASGPPSRPGTGMSNASSIDDLLGAPQARKGAGAKKKKGGRYVDVFPQGQAS.

Disordered stretches follow at residues M1–V129, A143–T277, E292–K817, and G1428–S1776. Positions S46–N79 are enriched in acidic residues. Composition is skewed to polar residues over residues L111–S124 and Q144–K158. Residues T162–A181 show a composition bias toward acidic residues. Over residues H187 to G196 the composition is skewed to basic and acidic residues. Acidic residues-rich tracts occupy residues A217–D226 and D321–P353. Polar residues-rich tracts occupy residues N394–T406 and Y415–A439. A compositionally biased stretch (pro residues) spans P522–K533. Positions P557–Q573 are enriched in low complexity. Residues S612–Q627 are compositionally biased toward polar residues. The segment covering T629–V644 has biased composition (pro residues). Composition is skewed to polar residues over residues T692–P704 and N716–A734. Residues D761–A782 show a composition bias toward low complexity. Composition is skewed to polar residues over residues R1445 to S1454 and N1477 to G1496. Over residues S1560–A1586 the composition is skewed to basic and acidic residues. Residues P1652–G1661 are compositionally biased toward low complexity. A compositionally biased stretch (pro residues) spans M1662–S1671.

It belongs to the SEC16 family.

The protein localises to the endoplasmic reticulum membrane. In terms of biological role, involved in the initiation of assembly of the COPII coat required for the formation of transport vesicles from the endoplasmic reticulum (ER) and the selection of cargo molecules. Also involved in autophagy. The polypeptide is COPII coat assembly protein SEC16 (SEC16) (Phaeosphaeria nodorum (strain SN15 / ATCC MYA-4574 / FGSC 10173) (Glume blotch fungus)).